Reading from the N-terminus, the 312-residue chain is Acetaldehyde dehydrogenase 4 (312 aa).

Position 12–15 (serine 12–isoleucine 15) interacts with NAD(+). The Acyl-thioester intermediate role is filled by cysteine 132. NAD(+) is bound by residues serine 163 to asparagine 171 and asparagine 290.

This sequence belongs to the acetaldehyde dehydrogenase family.

The enzyme catalyses acetaldehyde + NAD(+) + CoA = acetyl-CoA + NADH + H(+). The chain is Acetaldehyde dehydrogenase 4 from Azotobacter vinelandii (strain DJ / ATCC BAA-1303).